Here is a 409-residue protein sequence, read N- to C-terminus: MLMPLGGLLWWWCCCCGWYSCGLCTPAPQMLRHQGLLKCRCRMLFNDLKVFLLRRPPPAPLPMHGDPQLPGVAANNNTLPALGAGGWAGWRGPREAVGRETPPLPPPPPLPPSGDDDWDGPATGPPASLLSSASSDEFCKEKTEDCYSLGSSLDSGMRTPLCRICFQGPEQGELLSPCRCDGSVKCTHQPCLIKWISERGCWSCELCYYKYHVIAISTKNPLQWQAISLTVIEKVQIAAAILGSLFLIASISWLIWSTFSPSAKWQRQDLLFQICYGMYGFMDVVCIGLIIHEGPSVYRIFKRWQAVNQQWKVLNYDKTKDLEDQKSGGRTNLQTSSSAQANLPSAEEEAASPPAREEGPTRAASHPSGPVSQHHCAYTILHILSHLRPHDQRSTQGSGRELVMRVTTV.

Residues 1–17 form the signal peptide; the sequence is MLMPLGGLLWWWCCCCG. The segment at 92-133 is disordered; the sequence is GPREAVGRETPPLPPPPPLPPSGDDDWDGPATGPPASLLSSA. Positions 102 to 112 are enriched in pro residues; sequence PPLPPPPPLPP. The segment at 154-214 adopts an RING-CH-type zinc-finger fold; sequence DSGMRTPLCR…ELCYYKYHVI (61 aa). Positions 162, 165, 178, 180, 188, 191, 204, and 207 each coordinate Zn(2+). Helical transmembrane passes span 242 to 262 and 271 to 291; these read LGSL…FSPS and LFQI…GLII. Disordered regions lie at residues 323–372 and 389–409; these read EDQK…GPVS and PHDQ…VTTV. Positions 328 to 343 are enriched in polar residues; that stretch reads GGRTNLQTSSSAQANL.

The protein resides in the golgi apparatus membrane. The catalysed reaction is S-ubiquitinyl-[E2 ubiquitin-conjugating enzyme]-L-cysteine + [acceptor protein]-L-lysine = [E2 ubiquitin-conjugating enzyme]-L-cysteine + N(6)-ubiquitinyl-[acceptor protein]-L-lysine.. It functions in the pathway protein modification; protein ubiquitination. E3 ubiquitin-protein ligase that may mediate ubiquitination of MHC-I and CD4, and promote their subsequent endocytosis and sorting to lysosomes via multivesicular bodies. E3 ubiquitin ligases accept ubiquitin from an E2 ubiquitin-conjugating enzyme in the form of a thioester and then directly transfer the ubiquitin to targeted substrates. This is E3 ubiquitin-protein ligase MARCHF4 (Marchf4) from Mus musculus (Mouse).